The sequence spans 92 residues: Ezrin (92 aa).

Residues 1–72 form the FERM domain; the sequence is QLFDQVVKGF…PDFVFYAPRR (72 aa). K15 carries the N6-acetyllysine modification. The segment at 42-92 is interaction with SCYL3; the sequence is EIRNISFNDKKFVIKPIDKKAPDFVFYAPRRKPDTIEVQQMKLQDFEQKTK.

In terms of assembly, interacts with PALS1 and NHERF2. Found in a complex with EZR, PODXL and NHERF2. Interacts with MCC, PLEKHG6, PODXL, SCYL3/PACE1, NHERF1 and TMEM8B. Interacts (when phosphorylated) with FES/FPS. Interacts with dimeric S100P, the interaction may be activating through unmasking of F-actin binding sites. Identified in complexes that contain VIM, EZR, AHNAK, BFSP1, BFSP2, ANK2, PLEC, PRX and spectrin. Detected in a complex composed of at least EZR, AHNAK, PPL and PRX. Interacts with PDPN (via cytoplasmic domain); activates RHOA and promotes epithelial-mesenchymal transition. Interacts with SPN/CD43 cytoplasmic tail, CD44 and ICAM2. Interacts with CLIC5; may work together in a complex which also includes RDX and MYO6 to stabilize linkages between the plasma membrane and subjacent actin cytoskeleton at the base of stereocilia. In terms of processing, phosphorylated by tyrosine-protein kinases. Phosphorylation by ROCK2 suppresses the head-to-tail association of the N-terminal and C-terminal halves resulting in an opened conformation which is capable of actin and membrane-binding. S-nitrosylation is induced by interferon-gamma and oxidatively-modified low-densitity lipoprotein (LDL(ox)) possibly implicating the iNOS-S100A8/9 transnitrosylase complex.

The protein localises to the apical cell membrane. It is found in the cell projection. The protein resides in the microvillus membrane. Its subcellular location is the ruffle membrane. It localises to the cytoplasm. The protein localises to the cell cortex. It is found in the cytoskeleton. The protein resides in the microvillus. With respect to regulation, a head-to-tail association, of the N-terminal and C-terminal halves results in a closed conformation (inactive form) which is incapable of actin or membrane-binding. Its function is as follows. Probably involved in connections of major cytoskeletal structures to the plasma membrane. In epithelial cells, required for the formation of microvilli and membrane ruffles on the apical pole. Along with PLEKHG6, required for normal macropinocytosis. This is Ezrin from Mesocricetus auratus (Golden hamster).